We begin with the raw amino-acid sequence, 324 residues long: MEEKDSKPSETAAEAQRQPEPSSGGGSGGGSSPSDSDTGRRRALMLPEVLQAPGNHQHPHRITNFFIDNILRPEFGRRKDAGTCCAGAGGARGGEGGAGTTEGGGGGAGGAEQLLGARESRPNPACAPSAGGTLSAAAGDPAVDGEGGSKTLSLHGGAKKPGDPGGSLDGVLKARGLGGGDLSVSSDSDSSQASATLGAQPMLWPAWVYCTRYSDRPSSGPRSRKPKKKNPNKEDKRPRTAFTAEQLQRLKAEFQTNRYLTEQRRQSLAQELSLNESQIKIWFQNKRAKIKKATGNKNTLAVHLMAQGLYNHSTTAKEGKSDSE.

Disordered stretches follow at residues 1–59 (MEEK…HQHP), 89–174 (GGAR…VLKA), and 215–240 (DRPSSGPRSRKPKKKNPNKEDKRPRT). Positions 89–110 (GGARGGEGGAGTTEGGGGGAGG) are enriched in gly residues. Residues 235 to 294 (DKRPRTAFTAEQLQRLKAEFQTNRYLTEQRRQSLAQELSLNESQIKIWFQNKRAKIKKAT) constitute a DNA-binding region (homeobox).

It belongs to the engrailed homeobox family. Cerebellar granule cells.

The protein localises to the nucleus. The polypeptide is Homeobox protein engrailed-2 (En2) (Mus musculus (Mouse)).